A 185-amino-acid polypeptide reads, in one-letter code: Large ribosomal subunit protein uL5 (185 aa).

The protein belongs to the universal ribosomal protein uL5 family. As to quaternary structure, part of the 50S ribosomal subunit; part of the 5S rRNA/L5/L18/L25 subcomplex. Contacts the 5S rRNA and the P site tRNA. Forms a bridge to the 30S subunit in the 70S ribosome.

Functionally, this is one of the proteins that bind and probably mediate the attachment of the 5S RNA into the large ribosomal subunit, where it forms part of the central protuberance. In the 70S ribosome it contacts protein S13 of the 30S subunit (bridge B1b), connecting the 2 subunits; this bridge is implicated in subunit movement. Contacts the P site tRNA; the 5S rRNA and some of its associated proteins might help stabilize positioning of ribosome-bound tRNAs. This chain is Large ribosomal subunit protein uL5, found in Caulobacter sp. (strain K31).